The chain runs to 249 residues: Hydantoin racemase (249 aa).

Belongs to the HyuE racemase family. Homohexamer.

The enzyme catalyses a D-5-monosubstituted hydantoin = a L-5-monosubstituted hydantoin. The catalysed reaction is D-5-[2-(methylsulfanyl)ethyl]hydantoin = L-5-[2-(methysulfanyl)ethyl]hydantoin. It catalyses the reaction D-5-benzylhydantoin = L-5-benzylhydantoin. It carries out the reaction D-5-isopropylhydantoin = L-5-isopropylhydantoin. The enzyme catalyses D-5-isobutylhydantoin = L-5-isobutylhydantoin. Strongly inhibited by Cu(2+) and Zn(2+). Slightly stimulated by the addition of Mn(2+) or Co(2+), but also by metal-chelating agents such as EDTA or EGTA, indicating that the enzyme is not a metalloenzyme. Functionally, involved in the asymmetric conversion of racemic 5-substituted hydantoins to the corresponding L-amino acids. Catalyzes the racemization via enolization of D- and L-5-monosubstituted hydantoins. Is able to racemize 5-substituted hydantoins having aromatic or aliphatic substituents such as 5-(2-methylthioethyl)hydantoin, 5-isopropylhydantoin, 5-isobutylhydantoin and 5-benzylhydantoin. This Pseudomonas sp. (strain NS671) protein is Hydantoin racemase.